Reading from the N-terminus, the 874-residue chain is Collagen alpha-2(I) chain (874 aa).

The segment at 1–874 (SGGFDFSFLP…FGYEGDFYRA (874 aa)) is disordered. A 4-hydroxyproline mark is found at Pro10 and Pro13. At Lys16 the chain carries Allysine. Positions 27-66 (LMGPRGPPGASGAPGPQGFQGPAGEPGEPGQTGPAGARGP) are enriched in low complexity. Pro34 and Pro40 each carry 4-hydroxyproline. Lys93 is subject to 5-hydroxylysine; alternate. Lys93 is a glycosylation site (O-linked (Gal...) hydroxylysine; alternate). Low complexity-rich tracts occupy residues 110 to 143 (ARGR…SAGP), 188 to 209 (PGAN…AGAP), and 218 to 236 (PGPV…AGSK). A compositionally biased stretch (gly residues) spans 237-246 (GESGGKGEPG). The span at 247 to 257 (SAGPQGPPGSS) shows a compositional bias: low complexity. A 4-hydroxyproline mark is found at Pro317 and Pro320. 3 stretches are compositionally biased toward low complexity: residues 346–365 (LPGI…RGEA), 434–451 (PGES…SRGP), and 463–473 (EPGVVGAPGTA). Over residues 474-483 (GPAGSGGLPG) the composition is skewed to gly residues. 2 stretches are compositionally biased toward low complexity: residues 491-538 (RGEV…PRGS) and 545-565 (VGPA…QPGA). Residues 566–575 (KGERGTKGPK) show a composition bias toward basic and acidic residues. Positions 583–593 (PTGPVGSAGPA) are enriched in low complexity. Over residues 603-612 (GSRGDGGPPG) the composition is skewed to gly residues. Residues 614–623 (TGFPGAAGRT) show a composition bias toward low complexity. The segment covering 648–662 (GPVGRGETGAGGPPG) has biased composition (gly residues). 2 stretches are compositionally biased toward low complexity: residues 663 to 697 (FTGE…LGLP) and 705 to 724 (LPGV…AGPP). Gly residues predominate over residues 725–744 (GARGDGNPGSDGPPGRGAAG). Composition is skewed to low complexity over residues 745-755 (APGPHGTVGPA) and 763-778 (EPGP…ALGP).

This sequence belongs to the fibrillar collagen family. In terms of assembly, trimers of one alpha 2(I) and two alpha 1(I) chains. Interacts (via C-terminus) with TMEM131 (via PapD-L domain); the interaction is direct and is involved in assembly and TRAPPIII ER-to-Golgi transport complex-dependent secretion of collagen. In terms of processing, prolines at the third position of the tripeptide repeating unit (G-X-Y) are hydroxylated in some or all of the chains. As to expression, expressed in bones.

It localises to the secreted. It is found in the extracellular space. Its subcellular location is the extracellular matrix. Functionally, type I collagen is a member of group I collagen (fibrillar forming collagen). The sequence is that of Collagen alpha-2(I) chain from Megalonyx jeffersonii (Jefferson's ground sloth).